Reading from the N-terminus, the 618-residue chain is DNA mismatch repair protein MutL (618 aa).

Belongs to the DNA mismatch repair MutL/HexB family.

This protein is involved in the repair of mismatches in DNA. It is required for dam-dependent methyl-directed DNA mismatch repair. May act as a 'molecular matchmaker', a protein that promotes the formation of a stable complex between two or more DNA-binding proteins in an ATP-dependent manner without itself being part of a final effector complex. In Porphyromonas gingivalis (strain ATCC 33277 / DSM 20709 / CIP 103683 / JCM 12257 / NCTC 11834 / 2561), this protein is DNA mismatch repair protein MutL.